The sequence spans 599 residues: MDKKFIRNFSIIAHIDHGKSTLSDRIIEFTNTLSKREMTNQILDSMDIERERGITIKLNAVQIKYHAKDKHEYLIHLIDTPGHVDFTYEVSRSLAACEGAILVVDAAQGIEAQTLSNVYLALENNLEIVPTINKIDLPSADPNRVKKEIEDVIGLDTADVPLISAKTGLNIQDVLEAIIKHVPPPLDAKDDAKLQALIFDSFYDSYKGVVCLVRVKQGTIKVGDKIRMMANNKDYIVSELGIRTPKIVNKTELVAGEVGWVAAAIKTVKDINVGDTITHTNNPADKPLPGYKKILPMVYCGLYPIDTSQYDDLKEAMAKISLSDAALTYEYETSQALGFGIRCGFLGLLHMDVIRERIAREFNIELILTAPSVIYKIELTNNQEISIDSPAKMPEPTSIKLIKEPFVKLAIITPDNYVGAIMELCQSRRGIYDDLEVIDGTRRKLIYKMPLAEIMYSFFDSLKSITKGYATMDYELIGYQAEKLVKIDIMLNGNKVDALSIIAHRDFAYGKSKIICERLKEVIPKHQFEIPIQASIGSKIIARETIKAVRKDVIAKCYGGDVSRKKKLLEQQKEGKKRLKAIGNVDVPQDAFVKVLSEN.

Positions 4-186 (KFIRNFSIIA…AIIKHVPPPL (183 aa)) constitute a tr-type G domain. GTP contacts are provided by residues 16–21 (DHGKST) and 133–136 (NKID).

The protein belongs to the TRAFAC class translation factor GTPase superfamily. Classic translation factor GTPase family. LepA subfamily.

It is found in the cell membrane. The catalysed reaction is GTP + H2O = GDP + phosphate + H(+). Functionally, required for accurate and efficient protein synthesis under certain stress conditions. May act as a fidelity factor of the translation reaction, by catalyzing a one-codon backward translocation of tRNAs on improperly translocated ribosomes. Back-translocation proceeds from a post-translocation (POST) complex to a pre-translocation (PRE) complex, thus giving elongation factor G a second chance to translocate the tRNAs correctly. Binds to ribosomes in a GTP-dependent manner. This is Elongation factor 4 from Ureaplasma parvum serovar 3 (strain ATCC 27815 / 27 / NCTC 11736).